A 494-amino-acid polypeptide reads, in one-letter code: MDPCKFRPSSSFDTKTTTTNAGQPVWNDNEALTVGPRGPILLEDYHLLEKIAHFARERIPERVVHARGASAKGFFECTHDVTGLTCADFLRAPGARTPVIVRFSTVIHERGSPETIRDPRGFAVKFYTREGNWDLLGNNFPVFFIRDGIKFPDVIHAFKPNPKSHVQEYWRVFDFLSHHPESLHTFFFLFDDVGIPTDYRHMDGFGVNTYTFVSRAGKSHYVKFHWRPTCGVSCLMDDEATLVGGKNHSHATQDLYDSIDAGNFPEWKLFVQVIDPDEEDRFDFDPLDDTKTWPEDLVPLQPVGRLVLDRNVDNFFNENEQLAFGPGLVVPGIYYSDDKMLQCRVFAYADTQRYRLGPNYLMLPVNAPKCGFKNNHYDGAMNFMHRDEEVDYYPSRHAPLRHAEPASFPVPTRPVVGKREKTRIKKENDFVQPGERYRSWAPDRQDRFVRRFSDALAHPKVSHELRVIWIDFLSKCDKSCGMKVANRLNVKPSM.

The disordered stretch occupies residues 1-29 (MDPCKFRPSSSFDTKTTTTNAGQPVWNDN). The segment covering 8–22 (PSSSFDTKTTTTNAG) has biased composition (polar residues). Catalysis depends on residues H65 and N138. Y348 contributes to the heme binding site.

This sequence belongs to the catalase family. Homotetramer. The cofactor is heme.

The protein localises to the peroxisome. The protein resides in the glyoxysome. It carries out the reaction 2 H2O2 = O2 + 2 H2O. Occurs in almost all aerobically respiring organisms and serves to protect cells from the toxic effects of hydrogen peroxide. The sequence is that of Catalase isozyme 2 (CAT2) from Hordeum vulgare (Barley).